A 256-amino-acid chain; its full sequence is UPF0246 protein Sbal_1048 (256 aa).

The protein belongs to the UPF0246 family.

The chain is UPF0246 protein Sbal_1048 from Shewanella baltica (strain OS155 / ATCC BAA-1091).